We begin with the raw amino-acid sequence, 416 residues long: Tiggy-winkle hedgehog protein (416 aa).

A signal peptide spans 1-26 (MDVRLHLKQFALLCFISLLLTPCGLA). Cys-27 carries the N-palmitoyl cysteine lipid modification. The Ca(2+) site is built by Glu-92, Glu-93, Asp-98, Thr-128, Glu-129, Asp-132, and Asp-134. Zn(2+) is bound by residues His-143, Asp-150, and His-185. A lipid anchor (Cholesterol glycine ester) is attached at Gly-200.

The protein belongs to the hedgehog family. In terms of assembly, multimer. As to quaternary structure, interacts with HHATL/GUP1 which negatively regulates HHAT-mediated palmitoylation of the TWHH N-terminus. Interacts with BOC and CDON. Interacts with HHIP. Interacts with DISP1 via its cholesterol anchor. Interacts with SCUBE2. Post-translationally, the C-terminal domain displays an autoproteolysis activity and a cholesterol transferase activity. Both activities result in the cleavage of the full-length protein into two parts (N-product and C-product) followed by the covalent attachment of a cholesterol moiety to the C-terminal of the newly generated N-product. Cholesterylation is required for the tiggy-winkle hedgehog protein N-product targeting to lipid rafts and multimerization. N-product is the active species in both local and long-range signaling, whereas the C-product is degraded in the endoplasmic reticulum. N-palmitoylation by HHAT of N-product is required for tiggy-winkle hedgehog protein N-product multimerization and full activity. It is a prerequisite for the membrane-proximal positioning and the subsequent shedding of this N-terminal peptide. In terms of processing, the lipidated N- and C-terminal peptides of N-product can be cleaved (shedding). The N-terminal palmitoylated peptide is cleaved at the Cardin-Weintraub (CW) motif site. The cleavage reduced the interactions with heparan sulfate. The cleavage is enhanced by SCUBE2. As to expression, expressed in the ventral midline of the neural tube and brain. In the developing brain, expression occurs in domains that include a discrete region in the floor of the diencephalon. Not detected in the notochord or developing fin bud.

Its subcellular location is the cell membrane. The protein resides in the endoplasmic reticulum membrane. It localises to the golgi apparatus membrane. Its function is as follows. The C-terminal part of the tiggy-winkle hedgehog protein precursor displays an autoproteolysis and a cholesterol transferase activity. Both activities result in the cleavage of the full-length protein into two parts (N-product and C-product) followed by the covalent attachment of a cholesterol moiety to the C-terminal of the newly generated N-product. Both activities occur in the endoplasmic reticulum. Once cleaved, the C-product is degraded in the endoplasmic reticulum. In terms of biological role, the dually lipidated tiggy-winkle hedgehog protein N-product is a morphogen which is essential for a variety of patterning events during development. Involved in dorso-ventral patterning of the brain and in early patterning of the developing eyes. Binds to the patched (PTCH1) receptor, which functions in association with smoothened (SMO), to activate the transcription of target genes. This is Tiggy-winkle hedgehog protein (shhb) from Danio rerio (Zebrafish).